Here is a 116-residue protein sequence, read N- to C-terminus: Ribonuclease P protein component (116 aa).

The protein belongs to the RnpA family. In terms of assembly, consists of a catalytic RNA component (M1 or rnpB) and a protein subunit.

The catalysed reaction is Endonucleolytic cleavage of RNA, removing 5'-extranucleotides from tRNA precursor.. Its function is as follows. RNaseP catalyzes the removal of the 5'-leader sequence from pre-tRNA to produce the mature 5'-terminus. It can also cleave other RNA substrates such as 4.5S RNA. The protein component plays an auxiliary but essential role in vivo by binding to the 5'-leader sequence and broadening the substrate specificity of the ribozyme. The protein is Ribonuclease P protein component of Leuconostoc citreum (strain KM20).